Consider the following 437-residue polypeptide: tRNA-2-methylthio-N(6)-dimethylallyladenosine synthase (437 aa).

Residues 2 to 117 (KHLYIKTFGC…LPQMIQRALD (116 aa)) enclose the MTTase N-terminal domain. Residues cysteine 11, cysteine 48, cysteine 80, cysteine 154, cysteine 158, and cysteine 161 each coordinate [4Fe-4S] cluster. One can recognise a Radical SAM core domain in the interval 140 to 372 (RAQGVVGQVT…QQLLNTQQLQ (233 aa)). The region spanning 375–437 (KARVGRRESV…LPNSLRGRLV (63 aa)) is the TRAM domain.

It belongs to the methylthiotransferase family. MiaB subfamily. As to quaternary structure, monomer. The cofactor is [4Fe-4S] cluster.

The protein localises to the cytoplasm. The enzyme catalyses N(6)-dimethylallyladenosine(37) in tRNA + (sulfur carrier)-SH + AH2 + 2 S-adenosyl-L-methionine = 2-methylsulfanyl-N(6)-dimethylallyladenosine(37) in tRNA + (sulfur carrier)-H + 5'-deoxyadenosine + L-methionine + A + S-adenosyl-L-homocysteine + 2 H(+). Its function is as follows. Catalyzes the methylthiolation of N6-(dimethylallyl)adenosine (i(6)A), leading to the formation of 2-methylthio-N6-(dimethylallyl)adenosine (ms(2)i(6)A) at position 37 in tRNAs that read codons beginning with uridine. The chain is tRNA-2-methylthio-N(6)-dimethylallyladenosine synthase from Magnetococcus marinus (strain ATCC BAA-1437 / JCM 17883 / MC-1).